The chain runs to 1816 residues: MFNKSFGTPFGGSTGGFGTTSTFGQNTGFGTTSGGAFGTSAFGSSNNTGGLFGNSQTKPGGLFGTSSFSQPATSTSTGFGFGTSTGTSNSLFGTASTGTSLFSSQNNAFAQNKPTGFGNFGTSTSSGGLFGTTNTTSNPFGSTSGSLFGPSSFTAAPTGTTIKFNPPTGTDTMVKAGVSTNISTKHQCITAMKEYESKSLEELRLEDYQANRKGPQNQVGGGTTAGLFGSSPATSSATGLFSSSTTNSAFSYGQNKTAFGTSTTGFGTNPGGLFGQQNQQTTSLFSKPFGQATTTPNTGFSFGNTSTLGQPSTNTMGLFGVTQASQPGGLFGTATNTSTGTAFGTGTGLFGQPNTGFGAVGSTLFGNNKLTTFGTSTTSAPSFGTTSGGLFGNKPTLTLGTNTNTSNFGFGTNNSGSSIFGSKPAAGTLGTGLGTGFGTALGAGQASLFGNNQPKIGGPLGTGAFGAPGFNTSTAILGFGAPQAPVALTDPNASAAQQAVLQQHLNSLTYSPFGDSPLFRNPMSDPKKKEERLKPTNPAAQKALTTPTHYKLTPRPATRVRPKALQTTGTAKSHLFDGLDDDEPSLANGAFMPKKSIKKLVLKNLNNSNLFSPVNHDSEDLASPSEYPENGERFSFLSKPVDENNQQDGEDDSLVSRFYTNPIAKPIPQTPESVGNKNNSSSNVEDTIVALNMRAALRNGLEGSSEETSFHDESLQDDREEIENNAYHIHPAGIVLTKVGYYTIPSMDDLAKITNEKGECIVSDFTIGRKGYGSIYFEGDVNLTNLNLDDIVHIRRKEVIVYVDDNQKPPVGEGLNRKAEVTLDGVWPTDKTSRCLIKSPDRLADINYEGRLEAVSRKQGAQFKEYRPETGSWVFKVSHFSKYGLQDSDEEEEEHPPKTTSKKLKTAPLPPAGQATTFQMTLNGKPAPPPQSQSPEVEQLGRVVELDSDMVDITQEPVPDSVLEESVPEDQEPVSASTHIASSLGINPHVLQIMKASLLVDEEDVDAMDQRFGHIPSKGETVQEICSPRLPISASHSSKSRSIVGGLLQSKFASGTFLSPSASVQECRTPRTSSRMNIPSTSPWSVPLPLATVFTVPSPAPEVQLKTVGIRRQPGLVPLEKSITYGKGKLLMDMALFMGRSFRVGWGPNWTLANSGEQLHGSHELENHQVADSMEYGFLPNPVAVKSLSESPFKVHLEKLGLRQRKLDEDLQLYQTPLELKLKHSTVHVDELCPLIVPNPGVSVIHDYADWVKDSPGDFLELPIVKHWSLTWTLCEALWGHLKELDGQLDEPSEYIQTLERRRAFSRWLSHTAAPQIEEEVSLTRRDSPVEAVFSYLTGSRISGACCLAQQSGDHRLALLLSQLVGSQSVRELLTMQLADWHQLQADSFIHDERLRIFALLAGKPVWQLSEQKQINVCSQLDWKRTLAIHLWYLLPPTASISRALSMYEEAFQNTPEGDKYACSPLPSYLEGCGCMVEEEKDSRRPLQDVCFHLLKLYSDRHYELNQLLEPRSITADPLDYRLSWHLWEVLRALNYTHLSEQCEGVLQASYAGQLESEGLWEWAIFVFLHIDNSGMREKAVRELLTRHCQLSETPESWAKEAFLTQKLCVPAEWIHEAKAVRAHMESNKHLEALYLFKAGHWNRCHKLVIRHLASDAIINENYDYLKGFLEDLAPPERSSLIQDWETSGLVYLDYIRVIEMLHRIQQVDCSGYELEHLHTKVTSLCNRIEQIPCYNAKDRLAQSDMAKRVANLLRVVLSLQHAPDATSNSTPDPQRVPLRLLAPHIGRLPMPEDYALEELRGLTQSYLRELTVGSQ.

The FG repeats 1 stretch occupies residues 1–156; sequence MFNKSFGTPF…LFGPSSFTAA (156 aa). Residues 157–213 are GLEBS; interaction with RAE1; it reads PTGTTIKFNPPTGTDTMVKAGVSTNISTKHQCITAMKEYESKSLEELRLEDYQANRK. Residues 214-480 form an FG repeats 2 region; that stretch reads GPQNQVGGGT…NTSTAILGFG (267 aa). The tract at residues 512-535 is disordered; that stretch reads PFGDSPLFRNPMSDPKKKEERLKP. A Phosphoserine modification is found at S524. The segment covering 525–534 has biased composition (basic and acidic residues); it reads DPKKKEERLK. Residue K563 forms a Glycyl lysine isopeptide (Lys-Gly) (interchain with G-Cter in SUMO2) linkage. K603 carries the post-translational modification N6-acetyllysine; alternate. K603 is covalently cross-linked (Glycyl lysine isopeptide (Lys-Gly) (interchain with G-Cter in SUMO2); alternate). Phosphoserine occurs at positions 608, 612, 618, 623, 625, and 653. The tract at residues 663-682 is disordered; the sequence is IAKPIPQTPESVGNKNNSSS. A Glycyl lysine isopeptide (Lys-Gly) (interchain with G-Cter in SUMO2) cross-link involves residue K665. T670 carries the post-translational modification Phosphothreonine. Phosphoserine is present on residues S673, S680, S681, and S839. Residues 673-682 are compositionally biased toward low complexity; the sequence is SVGNKNNSSS. Residues 738 to 880 enclose the Peptidase S59 domain; it reads KVGYYTIPSM…GSWVFKVSHF (143 aa). S881 acts as the Nucleophile in catalysis. Positions 886 to 937 are disordered; sequence QDSDEEEEEHPPKTTSKKLKTAPLPPAGQATTFQMTLNGKPAPPPQSQSPEV. Phosphoserine is present on residues S888, S934, S1027, S1042, S1059, and S1063. T1069 carries the post-translational modification Phosphothreonine. The residue at position 1328 (S1328) is a Phosphoserine. The residue at position 1771 (T1771) is a Phosphothreonine.

It belongs to the nucleoporin GLFG family. In terms of assembly, part of the nuclear pore complex (NPC). Interacts directly with NUP96. Part of the Nup160 subcomplex in the nuclear pore which is composed of NUP160, NUP133, NUP107 and NUP96; this complex plays a role in RNA export and in tethering NUP98 and NUP153 to the nucleus. Interacts with RAE1. Does not interact with TPR. Interacts directly with NUP88 and NUP214, subunits of the cytoplasmic filaments of the NPC. Interacts (via N-terminus) with DHX9 (via DRBM, OB-fold and RGG domains); this interaction occurs in a RNA-dependent manner and stimulates DHX9-mediated ATPase activity. In terms of processing, autoproteolytically cleaved to yield Nup98 and Nup96 or Nup98 only, respectively. Cleaved Nup98 is necessary for the targeting of Nup98 to the nuclear pore and the interaction with Nup96.

It localises to the nucleus membrane. It is found in the nucleus. The protein localises to the nuclear pore complex. The protein resides in the nucleoplasm. In terms of biological role, plays a role in the nuclear pore complex (NPC) assembly and/or maintenance. NUP98 and NUP96 are involved in the bidirectional transport across the NPC. May anchor NUP153 and TPR to the NPC. In cooperation with DHX9, plays a role in transcription and alternative splicing activation of a subset of genes. Involved in the localization of DHX9 in discrete intranuclear foci (GLFG-body). The sequence is that of Nuclear pore complex protein Nup98-Nup96 (Nup98) from Mus musculus (Mouse).